The primary structure comprises 1872 residues: Chitin synthase 6 (1872 aa).

Residues 1–23 (MAQHLPPVGGNGGAHTQPSLPAL) are disordered. A Myosin motor domain is found at 1–779 (MAQHLPPVGG…CWMEIAQLSD (779 aa)). Residue 104 to 111 (GESGSGKT) participates in ATP binding. N-linked (GlcNAc...) asparagine glycosylation is found at Asn123, Asn291, Asn428, and Asn559. Residues 587–652 (VMQASVSSKP…VNKPSEEGAS (66 aa)) form a disordered region. Positions 659-683 (LDNVTKSFHAQNTNAYFVFCLKPND) are actin-binding. Asn661 carries N-linked (GlcNAc...) asparagine glycosylation. Transmembrane regions (helical) follow at residues 881-901 (WVFI…QHLG) and 920-940 (FIIW…PMLV). The region spanning 944-1003 (QYVFTGEELSAYNGKDGKASYAAIRGQVFDIGSFIPRHPLPYLPSKLFTQYAGTDITGLF) is the Cytochrome b5 heme-binding domain. N-linked (GlcNAc...) asparagine glycans are attached at residues Asn1030, Asn1055, and Asn1120. The chain crosses the membrane as a helical span at residues 1193-1213 (FILAVTIILCSIIAFKFLAAL). N-linked (GlcNAc...) asparagine glycans are attached at residues Asn1450 and Asn1556. Helical transmembrane passes span 1581–1601 (FIVF…AYIV), 1614–1634 (VPVL…IIFI), and 1641–1661 (MIAW…GLPL). Residues 1814–1869 (LPSDDALLAEIREILRTADLMTVTKKGVKQELERRFGVNLDSRRAYINSATEALLS) enclose the DEK-C domain.

This sequence belongs to the chitin synthase family. Class V subfamily.

The protein resides in the cell membrane. The enzyme catalyses [(1-&gt;4)-N-acetyl-beta-D-glucosaminyl](n) + UDP-N-acetyl-alpha-D-glucosamine = [(1-&gt;4)-N-acetyl-beta-D-glucosaminyl](n+1) + UDP + H(+). In terms of biological role, polymerizes chitin, a structural polymer of the cell wall and septum, by transferring the sugar moiety of UDP-GlcNAc to the non-reducing end of the growing chitin polymer. Required for appressorium penetration and invasive growth. The polypeptide is Chitin synthase 6 (Pyricularia oryzae (strain 70-15 / ATCC MYA-4617 / FGSC 8958) (Rice blast fungus)).